We begin with the raw amino-acid sequence, 388 residues long: LL-diaminopimelate aminotransferase (388 aa).

2 residues coordinate substrate: Tyr15 and Gly40. Pyridoxal 5'-phosphate is bound by residues Tyr69, 103–104 (SK), Tyr128, Asn178, Tyr209, and 237–239 (SLS). Lys104, Tyr128, and Asn178 together coordinate substrate. Lys240 carries the N6-(pyridoxal phosphate)lysine modification. Arg248 contributes to the pyridoxal 5'-phosphate binding site. Arg366 contributes to the substrate binding site.

It belongs to the class-I pyridoxal-phosphate-dependent aminotransferase family. LL-diaminopimelate aminotransferase subfamily. As to quaternary structure, homodimer. Pyridoxal 5'-phosphate is required as a cofactor.

The catalysed reaction is (2S,6S)-2,6-diaminopimelate + 2-oxoglutarate = (S)-2,3,4,5-tetrahydrodipicolinate + L-glutamate + H2O + H(+). Its pathway is amino-acid biosynthesis; L-lysine biosynthesis via DAP pathway; LL-2,6-diaminopimelate from (S)-tetrahydrodipicolinate (aminotransferase route): step 1/1. In terms of biological role, involved in the synthesis of meso-diaminopimelate (m-DAP or DL-DAP), required for both lysine and peptidoglycan biosynthesis. Catalyzes the direct conversion of tetrahydrodipicolinate to LL-diaminopimelate. Can also use m-DAP instead of LL-DAP as the amino-group donor. This chain is LL-diaminopimelate aminotransferase, found in Syntrophobacter fumaroxidans (strain DSM 10017 / MPOB).